A 398-amino-acid chain; its full sequence is Tryptophan synthase beta chain (398 aa).

N6-(pyridoxal phosphate)lysine is present on Lys-92.

Belongs to the TrpB family. In terms of assembly, tetramer of two alpha and two beta chains. It depends on pyridoxal 5'-phosphate as a cofactor.

The enzyme catalyses (1S,2R)-1-C-(indol-3-yl)glycerol 3-phosphate + L-serine = D-glyceraldehyde 3-phosphate + L-tryptophan + H2O. It functions in the pathway amino-acid biosynthesis; L-tryptophan biosynthesis; L-tryptophan from chorismate: step 5/5. In terms of biological role, the beta subunit is responsible for the synthesis of L-tryptophan from indole and L-serine. The sequence is that of Tryptophan synthase beta chain from Nitrosospira multiformis (strain ATCC 25196 / NCIMB 11849 / C 71).